We begin with the raw amino-acid sequence, 350 residues long: Spermidine/putrescine import ATP-binding protein PotA (350 aa).

An ABC transporter domain is found at Leu-6–Ile-236. Gly-38–Thr-45 is an ATP binding site.

It belongs to the ABC transporter superfamily. Spermidine/putrescine importer (TC 3.A.1.11.1) family. In terms of assembly, the complex is composed of two ATP-binding proteins (PotA), two transmembrane proteins (PotB and PotC) and a solute-binding protein (PotD).

The protein resides in the cell membrane. The enzyme catalyses ATP + H2O + polyamine-[polyamine-binding protein]Side 1 = ADP + phosphate + polyamineSide 2 + [polyamine-binding protein]Side 1.. Part of the ABC transporter complex PotABCD involved in spermidine/putrescine import. Responsible for energy coupling to the transport system. The chain is Spermidine/putrescine import ATP-binding protein PotA from Mesoplasma florum (strain ATCC 33453 / NBRC 100688 / NCTC 11704 / L1) (Acholeplasma florum).